A 685-amino-acid chain; its full sequence is Protein snwA (685 aa).

4 disordered regions span residues 1–62 (MTSL…GYLP), 88–112 (RKGK…TSIV), 347–573 (LAED…DSIY), and 605–685 (AVSN…SKKR). Low complexity-rich tracts occupy residues 30–41 (PQQQKQQQQQQQ) and 93–102 (KSSNSNTSNM). The interval 194-360 (ATYIKYTPSN…VRNERSGIIQ (167 aa)) is SNW. Residues 370-381 (DSDNDNDNDSSS) show a composition bias toward acidic residues. Over residues 399 to 494 (RSTERIPSRN…DRYSKRRSDS (96 aa)) the composition is skewed to basic and acidic residues. Positions 495 to 507 (DSDSDSDSSDSED) are enriched in acidic residues. Positions 508–556 (ERVRRERKEKLERDKIRMEKKRELEREYRLEASGKKSKFNRDQDRDISE) are enriched in basic and acidic residues. Residues 618–631 (EDNTSIQDVLSNSR) show a composition bias toward polar residues. Over residues 646-685 (PNKEFSGTDRSKDRTGPVAFEKEKKKSDDPFGFDDFSKKR) the composition is skewed to basic and acidic residues.

This sequence belongs to the SNW family. In terms of assembly, interacts with cypE.

Its subcellular location is the nucleus. This chain is Protein snwA (snwA), found in Dictyostelium discoideum (Social amoeba).